We begin with the raw amino-acid sequence, 287 residues long: Inhibitory synaptic factor 1 (287 aa).

The disordered stretch occupies residues 1 to 22 (MSQSRAPAREPSETPSQREQIR). Residues 25-58 (MKMVIQQLEGILKELKDVAHELREVVGQIDKLTS) adopt a coiled-coil conformation. Disordered stretches follow at residues 113 to 174 (RRSA…GTRE) and 189 to 287 (CDDD…NKDL). Residues 153-167 (EEASSSTHSQSQKTS) show a composition bias toward low complexity. Residues 189–209 (CDDDEDEDEDEDGRDEEEDKL) are compositionally biased toward acidic residues. Over residues 259–274 (RNSSTQTVSDKSTQTL) the composition is skewed to polar residues.

This sequence belongs to the INSYN1 family.

The protein localises to the postsynaptic density. Functionally, may be a component of the protein machinery at the inhibitory synapses, probably acting as a scaffold. This Danio rerio (Zebrafish) protein is Inhibitory synaptic factor 1.